A 539-amino-acid chain; its full sequence is Oviduct-specific glycoprotein (539 aa).

Residues 1 to 21 (MGKLLLWVGLLLMLKHHDGAA) form the signal peptide. Positions 22–385 (HKLVCYFTNW…HTLNNLLVND (364 aa)) constitute a GH18 domain. C26 and C51 are oxidised to a cystine. Chitin is bound by residues 71–72 (PL), 98–101 (GGWN), Y142, 211–214 (LSYD), and W355. N402 carries an N-linked (GlcNAc...) asparagine glycan. Disordered regions lie at residues 433-480 (TETH…KPLT) and 503-539 (QKVTPPGRKAGVPEKVTIPSGKMTVTPDGRAETLERL). A compositionally biased stretch (low complexity) spans 440 to 457 (ATMTTTPRGETATPTRTP).

This sequence belongs to the glycosyl hydrolase 18 family. As to expression, oviduct.

The protein resides in the cytoplasmic vesicle. The protein localises to the secretory vesicle. Binds to oocyte zona pellucida in vivo. May play a role in the fertilization process and/or early embryonic development. This Ovis aries (Sheep) protein is Oviduct-specific glycoprotein (OVGP1).